The primary structure comprises 356 residues: Peptide chain release factor 1 (356 aa).

The residue at position 235 (Gln-235) is an N5-methylglutamine.

The protein belongs to the prokaryotic/mitochondrial release factor family. Post-translationally, methylated by PrmC. Methylation increases the termination efficiency of RF1.

It is found in the cytoplasm. Peptide chain release factor 1 directs the termination of translation in response to the peptide chain termination codons UAG and UAA. In Hydrogenobaculum sp. (strain Y04AAS1), this protein is Peptide chain release factor 1.